Reading from the N-terminus, the 216-residue chain is Soluble inorganic pyrophosphatase 3 (216 aa).

Over residues 1–10 the composition is skewed to acidic residues; sequence MSEEAYEETQ. Positions 1-21 are disordered; the sequence is MSEEAYEETQESSQSPRPVPK. Substrate contacts are provided by Lys-66 and Arg-80. Catalysis depends on Tyr-88, which acts as the Proton donor. Substrate is bound at residue Tyr-92. 3 residues coordinate Mg(2+): Asp-102, Asp-107, and Asp-139. Tyr-176 contacts substrate.

This sequence belongs to the PPase family. It depends on Mg(2+) as a cofactor. As to expression, expressed preferentially in stamen, pollen and flower, and at a low level in lateral roots and root elongation zones.

The protein resides in the cytoplasm. The enzyme catalyses diphosphate + H2O = 2 phosphate + H(+). The sequence is that of Soluble inorganic pyrophosphatase 3 from Arabidopsis thaliana (Mouse-ear cress).